The sequence spans 262 residues: Type III pantothenate kinase (262 aa).

Residue 12–19 (DIGNTSIA) coordinates ATP. Substrate is bound by residues Tyr94 and 109–112 (GSDV). Asp111 serves as the catalytic Proton acceptor. Asp132 provides a ligand contact to K(+). Thr135 contacts ATP. Position 187 (Thr187) interacts with substrate.

It belongs to the type III pantothenate kinase family. Homodimer. Requires NH4(+) as cofactor. K(+) serves as cofactor.

The protein resides in the cytoplasm. It carries out the reaction (R)-pantothenate + ATP = (R)-4'-phosphopantothenate + ADP + H(+). The protein operates within cofactor biosynthesis; coenzyme A biosynthesis; CoA from (R)-pantothenate: step 1/5. Functionally, catalyzes the phosphorylation of pantothenate (Pan), the first step in CoA biosynthesis. The polypeptide is Type III pantothenate kinase (Borrelia garinii subsp. bavariensis (strain ATCC BAA-2496 / DSM 23469 / PBi) (Borreliella bavariensis)).